The sequence spans 838 residues: Serine/threonine-protein phosphatase 4 regulatory subunit 3 (838 aa).

Disordered regions lie at residues 452–482 (NNCN…SPSR) and 745–838 (AINK…SESS). Over residues 747–761 (NKQQDNNGERNTTTG) the composition is skewed to polar residues. Residues 783 to 792 (SDGENNENNE) show a composition bias toward acidic residues.

Regulatory subunit 3 (R3) of the histone H2A phosphatase complex (HTP-C) consisting of PPH3, PSY2 and PSY4.

The protein resides in the nucleus. Functionally, core regulatory subunit of the histone H2A phosphatase complex, which dephosphorylates H2AS128ph (gamma-H2A) that has been displaced from sites of DNA lesions in the double-stranded DNA break repair process. Dephosphorylation is necessary for efficient recovery from the DNA damage checkpoint. The sequence is that of Serine/threonine-protein phosphatase 4 regulatory subunit 3 (PSY2) from Eremothecium gossypii (strain ATCC 10895 / CBS 109.51 / FGSC 9923 / NRRL Y-1056) (Yeast).